Here is a 248-residue protein sequence, read N- to C-terminus: UPF0736 protein Bcer98_0893 (248 aa).

The protein belongs to the UPF0736 family.

This chain is UPF0736 protein Bcer98_0893, found in Bacillus cytotoxicus (strain DSM 22905 / CIP 110041 / 391-98 / NVH 391-98).